We begin with the raw amino-acid sequence, 732 residues long: Photosystem I P700 chlorophyll a apoprotein A1 (732 aa).

8 consecutive transmembrane segments (helical) span residues 61–84 (VFSS…FHGA), 145–168 (LKYA…FHMH), 185–209 (NAGQ…HIAL), 278–296 (IASH…GIIA), 317–340 (WHSR…HHIY), 356–382 (LSLF…IFMI), 414–436 (IIMG…IYIH), and 510–528 (FMVH…LILM). [4Fe-4S] cluster-binding residues include Cys-552 and Cys-561. 2 consecutive transmembrane segments (helical) span residues 568–589 (HVFL…HFFW) and 644–666 (LSGY…MFLW). His-655 is a chlorophyll a' binding site. 2 residues coordinate chlorophyll a: Met-663 and Tyr-671. Trp-672 serves as a coordination point for phylloquinone. Residues 704–724 (AVGLVHYMLGGIGTTWAFFLA) form a helical membrane-spanning segment.

It belongs to the PsaA/PsaB family. As to quaternary structure, the PsaA/B heterodimer binds the P700 chlorophyll special pair and subsequent electron acceptors. PSI consists of a core antenna complex that captures photons, and an electron transfer chain that converts photonic excitation into a charge separation. The eukaryotic PSI reaction center is composed of at least 11 subunits. The cofactor is P700 is a chlorophyll a/chlorophyll a' dimer, A0 is one or more chlorophyll a, A1 is one or both phylloquinones and FX is a shared 4Fe-4S iron-sulfur center..

The protein localises to the plastid. It localises to the chloroplast thylakoid membrane. It catalyses the reaction reduced [plastocyanin] + hnu + oxidized [2Fe-2S]-[ferredoxin] = oxidized [plastocyanin] + reduced [2Fe-2S]-[ferredoxin]. Functionally, psaA and PsaB bind P700, the primary electron donor of photosystem I (PSI), as well as the electron acceptors A0, A1 and FX. PSI is a plastocyanin/cytochrome c6-ferredoxin oxidoreductase, converting photonic excitation into a charge separation, which transfers an electron from the donor P700 chlorophyll pair to the spectroscopically characterized acceptors A0, A1, FX, FA and FB in turn. Oxidized P700 is reduced on the lumenal side of the thylakoid membrane by plastocyanin or cytochrome c6. The sequence is that of Photosystem I P700 chlorophyll a apoprotein A1 from Heterocapsa triquetra (Dinoflagellate).